The following is a 558-amino-acid chain: 2-hydroxy-7-methoxy-5-methyl-1-naphthoate--CoA ligase (558 aa).

ATP contacts are provided by residues 212–213 (GG), 329–331 (ASR), Val-351, Asp-435, Arg-450, and Lys-542.

The protein belongs to the ATP-dependent AMP-binding enzyme family.

It catalyses the reaction 2-hydroxy-7-methoxy-5-methyl-1-naphthoate + ATP + CoA = 2-hydroxy-7-methoxy-5-methyl-1-naphthoyl-CoA + AMP + diphosphate. It participates in antibiotic biosynthesis. Functionally, catalyzes the activation of 2-hydroxy-7-methoxy-5-methyl-1-naphthoate in the biosynthesis of the naphthoate moiety of the neocarzinostatin chromophore. Also catalyzes the activation of other 1-naphthoic acid analogs such as 2-hydroxy-5-methyl-1-naphthoate or 2,7-dihydroxy-5-methyl-1-naphthoate in vitro. This Streptomyces carzinostaticus protein is 2-hydroxy-7-methoxy-5-methyl-1-naphthoate--CoA ligase.